Reading from the N-terminus, the 358-residue chain is Carbamoyl phosphate synthase small chain (358 aa).

The interval 1–172 (MKAALALEDG…EAKRFESDGD (172 aa)) is CPSase. The L-glutamine site is built by serine 45, glycine 222, and glycine 224. The Glutamine amidotransferase type-1 domain occupies 174 to 358 (EVVLVDCGVK…RYVDMLREYR (185 aa)). Cysteine 249 functions as the Nucleophile in the catalytic mechanism. L-glutamine-binding residues include leucine 250, glutamine 253, asparagine 291, and phenylalanine 294. Catalysis depends on residues histidine 333 and glutamate 335.

The protein belongs to the CarA family. Composed of two chains; the small (or glutamine) chain promotes the hydrolysis of glutamine to ammonia, which is used by the large (or ammonia) chain to synthesize carbamoyl phosphate. Tetramer of heterodimers (alpha,beta)4.

It carries out the reaction hydrogencarbonate + L-glutamine + 2 ATP + H2O = carbamoyl phosphate + L-glutamate + 2 ADP + phosphate + 2 H(+). The enzyme catalyses L-glutamine + H2O = L-glutamate + NH4(+). Its pathway is amino-acid biosynthesis; L-arginine biosynthesis; carbamoyl phosphate from bicarbonate: step 1/1. It functions in the pathway pyrimidine metabolism; UMP biosynthesis via de novo pathway; (S)-dihydroorotate from bicarbonate: step 1/3. In terms of biological role, small subunit of the glutamine-dependent carbamoyl phosphate synthetase (CPSase). CPSase catalyzes the formation of carbamoyl phosphate from the ammonia moiety of glutamine, carbonate, and phosphate donated by ATP, constituting the first step of 2 biosynthetic pathways, one leading to arginine and/or urea and the other to pyrimidine nucleotides. The small subunit (glutamine amidotransferase) binds and cleaves glutamine to supply the large subunit with the substrate ammonia. This Archaeoglobus fulgidus (strain ATCC 49558 / DSM 4304 / JCM 9628 / NBRC 100126 / VC-16) protein is Carbamoyl phosphate synthase small chain.